The primary structure comprises 273 residues: Coiled-coil domain-containing protein 3 (273 aa).

Positions 1-21 are cleaved as a signal peptide; that stretch reads MPLPLLLAALCLAASPAPARA. N-linked (GlcNAc...) asparagine glycosylation occurs at Asn100. The stretch at 188-250 forms a coiled coil; sequence SVQKALFEEE…VNQKLNEKLG (63 aa).

As to quaternary structure, homodimer. N-glycosylated. As to expression, expressed in aorta and adipose tissue. Enriched in mature adipocytes. Over-expressed in adipose tissue from either hormonally-induced or nutritionally-regulated obese mice models.

Its subcellular location is the secreted. Functionally, negatively regulates TNF-alpha-induced pro-inflammatory response in endothelial cells (ECs) via inhibition of TNF-alpha-induced NF-kappaB activation in ECs. Positively regulates lipid accumulation in adipose cells. The chain is Coiled-coil domain-containing protein 3 (Ccdc3) from Mus musculus (Mouse).